Consider the following 258-residue polypeptide: Alcohol dehydrogenase 2 (258 aa).

Position 9 to 33 (9 to 33) interacts with NAD(+); it reads IFVGGLGFIGYEACKQLMAKNMASF. Serine 137 serves as a coordination point for substrate. Tyrosine 150 serves as the catalytic Proton acceptor.

It belongs to the short-chain dehydrogenases/reductases (SDR) family. As to quaternary structure, homodimer.

The enzyme catalyses a primary alcohol + NAD(+) = an aldehyde + NADH + H(+). It carries out the reaction a secondary alcohol + NAD(+) = a ketone + NADH + H(+). This Ceratitis capitata (Mediterranean fruit fly) protein is Alcohol dehydrogenase 2 (ADH2).